Reading from the N-terminus, the 261-residue chain is SURF1-like protein (261 aa).

2 helical membrane passes run Leu-17–Phe-37 and Leu-223–Leu-243.

This sequence belongs to the SURF1 family.

It is found in the mitochondrion inner membrane. Functionally, probably involved in the biogenesis of the COX complex. The protein is SURF1-like protein of Monosiga brevicollis (Choanoflagellate).